We begin with the raw amino-acid sequence, 909 residues long: MASLIGSAKLPFNNEVELISDEIEKGLNDSTTIRKFFEKRAQIEEEYAKNLQKLCKATPILLKSGGTSDAFSMIVESTNQFSNHTISTIQRFNQDVNDPLAGFIKDLRGELKQYSLEGQNLAKERKQAFDSLKSSKALYEQMCNNPESDVMKVQQSEEEYKLQVQACNQYHSLYHQEKLPKIQNEIIRLETVRMQKMKTNLKKYITEFESIPQKQQQSIKDSEELINSIDTKQDIQSFTNFNKTLNTPTPDFQFESCESINGGGGGAAGRKSKKGGWRQTISVLKIGNAFMKDDGTIVNGNSSLNSSSSNINILNNPIVFKIPIEEIMFKQKSKFPNLDIPYILVLLVNLIKKLDNGMGMKTEGIFRIPGHTSEVNALKKLINEQGEYQFPPDLYSIHPIASLLKLWLREMPQPLIPNYVYDKSLECQSIEEFIVFFKFLPASNQKIITYLAGFLNELVQPDNVVTSKMNLDNVAMVFAPSFLRCDSQDMILANVDREKTLVKLIIEGYLKLSDVCPIQLDDIDSKIQIPSFSNNNNNSTTTTTTTTTTTVPSSTSTNITTNGASALGAESSTTPLPSLTTFSQSQSSSPPNQPSPSITPQQVSNLPPSYQPPQPPPTMAPPPLFNIPQQQQQQQVTNNNNSGGYTPPPLQYTQSSSNLPPIQLGVTNSPSKPQLSDKQKEKEKEKEKEKEKEKEREKEKEKEKEKEKEKEKEKEKKGHKKSSSSTSPNSSSLSISNFLSSNKDKDKEKDKEKEKEKEKEKDKEILATNSTPEKPVSNRMSLIFSQQLQQQLQQQIQQHQQLQQQSNGSPTSPISPSSANNSPSMSPSMVKRTIRPNLPPLQSGTSATTSSSSLTSSSSPTLTSSKDNIQKQQLPELNQQQQQQSPQAELKSSGIKSLLQRVPPPPSQS.

The region spanning 1–257 (MASLIGSAKL…PTPDFQFESC (257 aa)) is the F-BAR domain. The region spanning 322–513 (IPIEEIMFKQ…LIIEGYLKLS (192 aa)) is the Rho-GAP domain. The disordered stretch occupies residues 529 to 909 (IPSFSNNNNN…QRVPPPPSQS (381 aa)). Composition is skewed to low complexity over residues 533 to 562 (SNNN…ITTN) and 571 to 602 (SSTT…TPQQ). Residues 609–625 (SYQPPQPPPTMAPPPLF) are compositionally biased toward pro residues. Over residues 651–674 (QYTQSSSNLPPIQLGVTNSPSKPQ) the composition is skewed to polar residues. Residues 672-809 (KPQLSDKQKE…QQLQQQSNGS (138 aa)) are a coiled coil. Over residues 675–716 (LSDKQKEKEKEKEKEKEKEKEREKEKEKEKEKEKEKEKEKEK) the composition is skewed to basic and acidic residues. Residues 723-741 (SSSTSPNSSSLSISNFLSS) show a composition bias toward low complexity. A compositionally biased stretch (basic and acidic residues) spans 742-765 (NKDKDKEKDKEKEKEKEKEKDKEI). Residues 767–785 (ATNSTPEKPVSNRMSLIFS) are compositionally biased toward polar residues. Composition is skewed to low complexity over residues 786–828 (QQLQ…MSPS) and 843–892 (SGTS…ELKS).

It localises to the cytoplasm. Its subcellular location is the contractile vacuole. Rho GTPase-activating protein involved in the signal transduction pathway. The sequence is that of GTPase activating protein homolog 4 (mgp4) from Dictyostelium discoideum (Social amoeba).